A 104-amino-acid polypeptide reads, in one-letter code: Flagellar hook-basal body complex protein FliE (104 aa).

This sequence belongs to the FliE family.

Its subcellular location is the bacterial flagellum basal body. The polypeptide is Flagellar hook-basal body complex protein FliE (Escherichia coli O6:K15:H31 (strain 536 / UPEC)).